A 623-amino-acid chain; its full sequence is E3 ubiquitin-protein ligase ORTHRUS 5 (623 aa).

A PHD-type zinc finger spans residues 12-62 (DGVCMRCQVNPPSEETLTCGTCVTPWHVSCLLPESLASSTGDWECPDCSGV). An RING-type 1 zinc finger spans residues 129 to 169 (CSICIQLPERPVTTPCGHNFCLKCFEKWAVGQGKLTCMICR). Residues 258-407 (TRNQGVLVGE…HKMCRYLFVR (150 aa)) form the YDG domain. An RING-type 2 zinc finger spans residues 498 to 555 (CQICRKVLSLPVTTPCAHNFCKACLEAKFAGITQLRDRSNGVRKLRAKKNIMTCPCCT). Positions 580-623 (KSEEEAEVAESSNISEEEGEEESEPPTKKIKMDKNSVGGTSLSA) are disordered. Over residues 594-603 (SEEEGEEESE) the composition is skewed to acidic residues. Positions 604 to 613 (PPTKKIKMDK) are enriched in basic and acidic residues.

As to expression, expressed in inflorescences.

It is found in the nucleus. It catalyses the reaction S-ubiquitinyl-[E2 ubiquitin-conjugating enzyme]-L-cysteine + [acceptor protein]-L-lysine = [E2 ubiquitin-conjugating enzyme]-L-cysteine + N(6)-ubiquitinyl-[acceptor protein]-L-lysine.. Its pathway is protein modification; protein ubiquitination. Its function is as follows. E3 ubiquitin-protein ligase. Participates in CpG methylation-dependent transcriptional regulation and epigenetic transcriptional silencing. Mediates ubiquitination with the E2 ubiquitin-conjugating enzyme UBC11. The chain is E3 ubiquitin-protein ligase ORTHRUS 5 (ORTH5) from Arabidopsis thaliana (Mouse-ear cress).